Consider the following 83-residue polypeptide: UPF0346 protein M28_Spy0369 (83 aa).

Belongs to the UPF0346 family.

This is UPF0346 protein M28_Spy0369 from Streptococcus pyogenes serotype M28 (strain MGAS6180).